The following is a 65-amino-acid chain: Large ribosomal subunit protein bL35 (65 aa).

It belongs to the bacterial ribosomal protein bL35 family.

This is Large ribosomal subunit protein bL35 from Xanthomonas campestris pv. campestris (strain ATCC 33913 / DSM 3586 / NCPPB 528 / LMG 568 / P 25).